Reading from the N-terminus, the 209-residue chain is Fibroblast growth factor 21 (209 aa).

A signal peptide spans 1–28; sequence MDSDETGFEHSGLWVSVLAGLLLGACQA. The tract at residues 143-209 is disordered; it reads PLHLPGNKSP…SQGRSPSYAS (67 aa). Positions 168-186 are enriched in pro residues; the sequence is PGLPPALPEPPGILAPQPP.

The protein belongs to the heparin-binding growth factors family. In terms of assembly, interacts (via C-terminus) with KLB; this interaction is direct. Interacts with FGFR4.

It localises to the secreted. Stimulates glucose uptake in differentiated adipocytes via the induction of glucose transporter SLC2A1/GLUT1 expression (but not SLC2A4/GLUT4 expression). Activity requires the presence of KLB. Regulates systemic glucose homeostasis and insulin sensitivity. The chain is Fibroblast growth factor 21 (FGF21) from Homo sapiens (Human).